The following is a 673-amino-acid chain: Centrosomal protein kizuna (673 aa).

Disordered regions lie at residues 175-207 (TEHKSPQPTKNFSIPDPHSHRQTAQSSNVTDSC), 255-413 (GSNT…ALKL), 432-480 (QTLS…NSVK), 494-516 (ECGRRSAIHSSESSCSLPSILND), and 613-673 (SEAS…DFYD). Polar residues-rich tracts occupy residues 196 to 207 (QTAQSSNVTDSC) and 255 to 266 (GSNTRHGKSNLS). Basic and acidic residues-rich tracts occupy residues 267 to 293 (EGKKSAELNSPLRERLSPENRTTDLKC) and 303 to 316 (ILTREHIEVEEKRA). A phosphoserine mark is found at Ser317 and Ser321. Over residues 331-357 (SENKWSQEKHSPWEGVSDHLAHREPKS) the composition is skewed to basic and acidic residues. Position 379 is a phosphothreonine; by PLK1 (Thr379). Basic and acidic residues predominate over residues 471 to 480 (TLKEHDNSVK). 2 stretches are compositionally biased toward low complexity: residues 503 to 512 (SSESSCSLPS) and 613 to 625 (SEASFSSSEGSPL). 3 positions are modified to phosphoserine: Ser647, Ser650, and Ser652.

The protein belongs to the kizuna family. Interacts with AKAP9, CEP72, ODF2, PCNT and TUBGCP2. Post-translationally, phosphorylation at Thr-379 by PLK1 is not needed for centrosomal localization or pericentriolar material expansion but is indispensable for spindle-pole stabilization.

The protein localises to the cytoplasm. It localises to the cytoskeleton. The protein resides in the microtubule organizing center. Its subcellular location is the centrosome. It is found in the cilium basal body. Its function is as follows. Centrosomal protein required for establishing a robust mitotic centrosome architecture that can endure the forces that converge on the centrosomes during spindle formation. Required for stabilizing the expanded pericentriolar material around the centriole. The polypeptide is Centrosomal protein kizuna (KIZ) (Homo sapiens (Human)).